The primary structure comprises 157 residues: Globin (157 aa).

Gly1 bears the N-acetylglycine mark. In terms of domain architecture, Globin spans 8 to 155 (SLSADQKAAI…MANIIDAEQK (148 aa)). Heme b is bound by residues His70 and His102.

This sequence belongs to the globin family. In terms of assembly, monomer.

The polypeptide is Globin (Nerita albicilla (Ox-palate nerite)).